The following is a 174-amino-acid chain: NADH-ubiquinone oxidoreductase chain 6 (174 aa).

4 consecutive transmembrane segments (helical) span residues 24–44 (LALG…TGLM), 53–73 (ILFL…TSLA), 82–102 (MKLT…SFIM), and 143–163 (FITI…VKIT).

This sequence belongs to the complex I subunit 6 family.

The protein resides in the mitochondrion membrane. The catalysed reaction is a ubiquinone + NADH + 5 H(+)(in) = a ubiquinol + NAD(+) + 4 H(+)(out). Functionally, core subunit of the mitochondrial membrane respiratory chain NADH dehydrogenase (Complex I) that is believed to belong to the minimal assembly required for catalysis. Complex I functions in the transfer of electrons from NADH to the respiratory chain. The immediate electron acceptor for the enzyme is believed to be ubiquinone. This Drosophila melanogaster (Fruit fly) protein is NADH-ubiquinone oxidoreductase chain 6 (mt:ND6).